A 225-amino-acid polypeptide reads, in one-letter code: UPF0758 protein BCE33L4198 (225 aa).

Positions 103–225 (SIRNPEDCAR…FVSLKEKGHI (123 aa)) constitute an MPN domain. H174, H176, and D187 together coordinate Zn(2+). Residues 174 to 187 (HNHPSGDPAPSRED) carry the JAMM motif motif.

This sequence belongs to the UPF0758 family.

The protein is UPF0758 protein BCE33L4198 of Bacillus cereus (strain ZK / E33L).